We begin with the raw amino-acid sequence, 307 residues long: Ubiquitin recognition factor in ER-associated degradation protein 1 (307 aa).

Methionine 1 bears the N-acetylmethionine mark. Serine 129, serine 231, serine 245, serine 247, and serine 299 each carry phosphoserine. Disordered regions lie at residues 230 to 255 and 288 to 307; these read GSGNRLDGKKKGVEPSPSPIKPGDIK and GRFIAFSGEGQSLRKKGRKP.

This sequence belongs to the UFD1 family. As to quaternary structure, heterodimer with NPLOC4, this heterodimer binds VCP and inhibits Golgi membrane fusion. Interacts with USP13. Interacts with ZFAND2B; probably through VCP.

It localises to the nucleus. It is found in the cytoplasm. The protein resides in the cytosol. It functions in the pathway protein degradation; proteasomal ubiquitin-dependent pathway. Functionally, essential component of the ubiquitin-dependent proteolytic pathway which degrades ubiquitin fusion proteins. The ternary complex containing UFD1, VCP and NPLOC4 binds ubiquitinated proteins and is necessary for the export of misfolded proteins from the ER to the cytoplasm, where they are degraded by the proteasome. The NPLOC4-UFD1-VCP complex regulates spindle disassembly at the end of mitosis and is necessary for the formation of a closed nuclear envelope. It may be involved in the development of some ectoderm-derived structures. Acts as a negative regulator of type I interferon production via the complex formed with VCP and NPLOC4, which binds to RIGI and recruits RNF125 to promote ubiquitination and degradation of RIGI. In Mus musculus (Mouse), this protein is Ubiquitin recognition factor in ER-associated degradation protein 1.